The sequence spans 134 residues: Small ribosomal subunit protein uS11 (134 aa).

The protein belongs to the universal ribosomal protein uS11 family. In terms of assembly, part of the 30S ribosomal subunit. Interacts with proteins S7 and S18. Binds to IF-3.

Located on the platform of the 30S subunit, it bridges several disparate RNA helices of the 16S rRNA. Forms part of the Shine-Dalgarno cleft in the 70S ribosome. This chain is Small ribosomal subunit protein uS11, found in Corynebacterium diphtheriae (strain ATCC 700971 / NCTC 13129 / Biotype gravis).